A 200-amino-acid chain; its full sequence is Recombination protein RecR (200 aa).

The C4-type zinc-finger motif lies at C57–C72. Residues G81–P176 form the Toprim domain.

The protein belongs to the RecR family.

Its function is as follows. May play a role in DNA repair. It seems to be involved in an RecBC-independent recombinational process of DNA repair. It may act with RecF and RecO. This Aliivibrio fischeri (strain ATCC 700601 / ES114) (Vibrio fischeri) protein is Recombination protein RecR.